A 277-amino-acid polypeptide reads, in one-letter code: MSSKSQLTYTARASKHPNALAKRLFEIAEAKKTNVTVSADVTTTKELLDLADRLGPYIAVIKTHIDILSDFSDETIEGLKALAQKHNFLIFEDRKFIDIGNTVQKQYHRGTLRISEWAHIINCSILPGEGIVEALAQTASAPDFGYGPERGLLILAEMTSKGSLATGQYTTSSVDYARKYKNFVMGFVSTRSLGEVQSEVSSPSDEEDFVVFTTGVNISSKGDKLGQQYQTPASAIGRGADFIIAGRGIYAAPDPVQAAQQYQKEGWEAYLARVGGN.

Substrate-binding positions include Asp-40, 62–64, 93–102, Tyr-229, and Arg-247; these read KTH and DRKFIDIGNT. Residue Lys-95 is the Proton donor of the active site.

Belongs to the OMP decarboxylase family.

It carries out the reaction orotidine 5'-phosphate + H(+) = UMP + CO2. It participates in pyrimidine metabolism; UMP biosynthesis via de novo pathway; UMP from orotate: step 2/2. In Aspergillus awamori (Black koji mold), this protein is Orotidine 5'-phosphate decarboxylase (pyrG).